The chain runs to 243 residues: Ubiquinone/menaquinone biosynthesis C-methyltransferase UbiE (243 aa).

S-adenosyl-L-methionine contacts are provided by residues threonine 69, aspartate 90, and 116–117 (DA).

The protein belongs to the class I-like SAM-binding methyltransferase superfamily. MenG/UbiE family.

The catalysed reaction is a 2-demethylmenaquinol + S-adenosyl-L-methionine = a menaquinol + S-adenosyl-L-homocysteine + H(+). It catalyses the reaction a 2-methoxy-6-(all-trans-polyprenyl)benzene-1,4-diol + S-adenosyl-L-methionine = a 5-methoxy-2-methyl-3-(all-trans-polyprenyl)benzene-1,4-diol + S-adenosyl-L-homocysteine + H(+). The protein operates within quinol/quinone metabolism; menaquinone biosynthesis; menaquinol from 1,4-dihydroxy-2-naphthoate: step 2/2. It functions in the pathway cofactor biosynthesis; ubiquinone biosynthesis. Methyltransferase required for the conversion of demethylmenaquinol (DMKH2) to menaquinol (MKH2) and the conversion of 2-polyprenyl-6-methoxy-1,4-benzoquinol (DDMQH2) to 2-polyprenyl-3-methyl-6-methoxy-1,4-benzoquinol (DMQH2). This Ralstonia pickettii (strain 12J) protein is Ubiquinone/menaquinone biosynthesis C-methyltransferase UbiE.